A 380-amino-acid chain; its full sequence is Opsin-2 (380 aa).

Topologically, residues 1-51 (MVNTTDFYPVPAAMAYESSVGLPLLGWNVPTEHLDLVHPHWRSFQVPNKYW) are extracellular. N-linked (GlcNAc...) asparagine glycosylation occurs at Asn-3. The helical transmembrane segment at 52 to 76 (HFGLAFVYFMLMCMSSLGNGIVLWI) threads the bilayer. Residues 77–88 (YATTKSIRTPSN) are Cytoplasmic-facing. The chain crosses the membrane as a helical span at residues 89–115 (MFIVNLALFDVLMLLEMPMLVVSSLFY). At 116–128 (QRPVGWELGCDIY) the chain is on the extracellular side. Cys-125 and Cys-202 are oxidised to a cystine. Residues 129 to 148 (AALGSVAGIGSAINNAAIAF) form a helical membrane-spanning segment. At 149–166 (DRYRTISCPIDGRLTQGQ) the chain is on the cytoplasmic side. The chain crosses the membrane as a helical span at residues 167-191 (VLALIAGTWVWTLPFTLMPLLRIWS). Topologically, residues 192–215 (RFTAEGFLTTCSFDYLTDDEDTKV) are extracellular. A helical membrane pass occupies residues 216–243 (FVGCIFAWSYAFPLCLICCFYYRLIGAV). The Cytoplasmic segment spans residues 244–279 (REHEKMLRDQAKKMNVKSLQSNADTEAQSAEIRIAK). The chain crosses the membrane as a helical span at residues 280-303 (VALTIFFLFLCSWTPYAVVAMIGA). The Extracellular portion of the chain corresponds to 304–311 (FGNRAALT). Residues 312 to 336 (PLSTMIPAVTAKIVSCIDPWVYAIN) traverse the membrane as a helical segment. Lys-323 is subject to N6-(retinylidene)lysine. The Cytoplasmic portion of the chain corresponds to 337-380 (HPRFRAEVQKRMKWLHLGEDARSSKSDTSSTATDRTVGNVSASA). Positions 358–380 (RSSKSDTSSTATDRTVGNVSASA) are disordered. Positions 362 to 372 (SDTSSTATDRT) are enriched in low complexity.

Belongs to the G-protein coupled receptor 1 family. Opsin subfamily. In terms of processing, phosphorylated on some or all of the serine and threonine residues present in the C-terminal region.

It is found in the membrane. Functionally, visual pigments are the light-absorbing molecules that mediate vision. They consist of an apoprotein, opsin, covalently linked to cis-retinal. The polypeptide is Opsin-2 (Lo2) (Schistocerca gregaria (Desert locust)).